The primary structure comprises 338 residues: LIX1-like protein (338 aa).

The tract at residues 1-65 is disordered; that stretch reads METMRAQRLQ…LLLAGAPGLP (65 aa). The span at 29 to 38 shows a compositional bias: low complexity; the sequence is TGAPTSAATP. Pro residues predominate over residues 39–56; it reads PAGPPPAPPPPAPPPPPL.

This sequence belongs to the LIX1 family.

This Rattus norvegicus (Rat) protein is LIX1-like protein (Lix1l).